Reading from the N-terminus, the 321-residue chain is Genome polyprotein (321 aa).

Residues 1–52 lie on the Cytoplasmic side of the membrane; that stretch reads RNLGKVIDTLTCGFADLMGYIPLVGAPLGGAARALAHGVRVLEDGVNYATGN. The interval 6–57 is interaction with APOA2; sequence VIDTLTCGFADLMGYIPLVGAPLGGAARALAHGVRVLEDGVNYATGNLPGCS. Residues 48 to 51 are important for lipid droplets localization; it reads YATG. Residues 53-73 form a helical membrane-spanning segment; the sequence is LPGCSFSLFLLALLSCLTVPA. Positions 62–75 are cleaved as a propeptide — ER anchor for the core protein, removed in mature form by host signal peptidase; it reads LLALLSCLTVPASA. Topologically, residues 74–242 are lumenal; the sequence is SAYQVRNSTG…AGAHWGVLAG (169 aa). N-linked (GlcNAc...) asparagine; by host glycans are attached at residues Asn80, Asn93, and Asn118. An important for fusion region spans residues 149 to 180; the sequence is LVGSATLCSALYVGDLCGSIFLVGQLFTFSPR. A glycan (N-linked (GlcNAc...) asparagine; by host) is linked at Asn189. A helical membrane pass occupies residues 243-263; sequence IAYFSMVGNWAKVLVVLLLFA. Over 264–321 the chain is Lumenal; it reads GVDAETTVTGGSAAHGALGIASLFNQGARQNIQLINTNGSWHINSTALNCNDSLNTGW. Residues 268–294 are HVR1; sequence ETTVTGGSAAHGALGIASLFNQGARQN. N-linked (GlcNAc...) (high mannose) asparagine; by host glycans are attached at residues Asn301, Asn307, and Asn314.

The protein belongs to the hepacivirus polyprotein family. Homooligomer. Interacts with E1 (via C-terminus). Interacts with the non-structural protein 5A. Interacts (via N-terminus) with host STAT1 (via SH2 domain); this interaction results in decreased STAT1 phosphorylation and ubiquitin-mediated proteasome-dependent STAT1 degradation, leading to decreased IFN-stimulated gene transcription. Interacts with host STAT3; this interaction constitutively activates STAT3. Interacts with host LTBR receptor. Interacts with host TNFRSF1A receptor and possibly induces apoptosis. Interacts with host HNRPK. Interacts with host YWHAE. Interacts with host UBE3A/E6AP. Interacts with host DDX3X. Interacts with host APOA2. Interacts with host RXRA protein. Interacts with host SP110 isoform 3/Sp110b; this interaction sequesters the transcriptional corepressor SP110 away from the nucleus. Interacts with host CREB3 nuclear transcription protein; this interaction triggers cell transformation. Interacts with host ACY3. Interacts with host C1QR1. Interacts with host RBM24; this interaction, which enhances the interaction of the mature core protein with 5'-UTR, may inhibit viral translation and favor replication. Interacts with host EIF2AK2/PKR; this interaction induces the autophosphorylation of EIF2AK2. Part of the viral assembly initiation complex composed of NS2, E1, E2, NS3, NS4A, NS5A and the mature core protein. As to quaternary structure, forms a heterodimer with envelope glycoprotein E2. Interacts with mature core protein. Interacts with protease NS2. The heterodimer E1/E2 interacts with host CLDN1; this interaction plays a role in viral entry into host cell. Interacts with host SPSB2 (via C-terminus). Part of the viral assembly initiation complex composed of NS2, E1, E2, NS3, NS4A, NS5A and the mature core protein. In terms of assembly, forms a heterodimer with envelope glycoprotein E1. Interacts with host CD81 and SCARB1 receptors; these interactions play a role in viral entry into host cell. Interacts with host EIF2AK2/PKR; this interaction inhibits EIF2AK2 and probably allows the virus to evade the innate immune response. Interacts with host CD209/DC-SIGN and CLEC4M/DC-SIGNR. Interact with host SPCS1; this interaction is essential for viral particle assembly. Interacts with protease NS2. The heterodimer E1/E2 interacts with host CLDN1; this interaction plays a role in viral entry into host cell. Part of the viral assembly initiation complex composed of NS2, E1, E2, NS3, NS4A, NS5A and the mature core protein. In terms of processing, specific enzymatic cleavages in vivo yield mature proteins. The structural proteins, core, E1, E2 and p7 are produced by proteolytic processing by host signal peptidases. The core protein precursor is synthesized as a 23 kDa, which is retained in the ER membrane through the hydrophobic signal peptide. Cleavage by the signal peptidase releases the 21 kDa mature core protein. The cleavage of the core protein precursor occurs between aminoacids 176 and 188 but the exact cleavage site is not known. Some degraded forms of the core protein appear as well during the course of infection. The other proteins (p7, NS2, NS3, NS4A, NS4B, NS5A and NS5B) are cleaved by the viral proteases. Autoprocessing between NS2 and NS3 is mediated by the NS2 cysteine protease catalytic domain and regulated by the NS3 N-terminal domain. Post-translationally, phosphorylated by host PKC and PKA. Ubiquitinated; mediated by UBE3A and leading to core protein subsequent proteasomal degradation. In terms of processing, highly N-glycosylated.

The protein localises to the host endoplasmic reticulum membrane. The protein resides in the host mitochondrion membrane. It is found in the virion. Its subcellular location is the host cytoplasm. It localises to the host nucleus. The protein localises to the host lipid droplet. The protein resides in the virion membrane. In terms of biological role, packages viral RNA to form a viral nucleocapsid, and promotes virion budding. Participates in the viral particle production as a result of its interaction with the non-structural protein 5A. Binds RNA and may function as a RNA chaperone to induce the RNA structural rearrangements taking place during virus replication. Modulates viral translation initiation by interacting with viral IRES and 40S ribosomal subunit. Affects various cell signaling pathways, host immunity and lipid metabolism. Prevents the establishment of cellular antiviral state by blocking the interferon-alpha/beta (IFN-alpha/beta) and IFN-gamma signaling pathways and by blocking the formation of phosphorylated STAT1 and promoting ubiquitin-mediated proteasome-dependent degradation of STAT1. Activates STAT3 leading to cellular transformation. Regulates the activity of cellular genes, including c-myc and c-fos. May repress the promoter of p53, and sequester CREB3 and SP110 isoform 3/Sp110b in the cytoplasm. Represses cell cycle negative regulating factor CDKN1A, thereby interrupting an important check point of normal cell cycle regulation. Targets transcription factors involved in the regulation of inflammatory responses and in the immune response: suppresses TNF-induced NF-kappa-B activation, and activates AP-1. Binds to dendritic cells (DCs) via C1QR1, resulting in down-regulation of T-lymphocytes proliferation. Alters lipid metabolism by interacting with hepatocellular proteins involved in lipid accumulation and storage. Induces up-regulation of FAS promoter activity, and thereby contributes to the increased triglyceride accumulation in hepatocytes (steatosis). Its function is as follows. Forms a heterodimer with envelope glycoprotein E2, which mediates virus attachment to the host cell, virion internalization through clathrin-dependent endocytosis and fusion with host membrane. Fusion with the host cell is most likely mediated by both E1 and E2, through conformational rearrangements of the heterodimer required for fusion rather than a classical class II fusion mechanism. E1/E2 heterodimer binds host apolipoproteins such as APOB and ApoE thereby forming a lipo-viro-particle (LVP). APOE associated to the LVP allows the initial virus attachment to cell surface receptors such as the heparan sulfate proteoglycans (HSPGs), syndecan-1 (SDC1), syndecan-1 (SDC2), the low-density lipoprotein receptor (LDLR) and scavenger receptor class B type I (SCARB1). The cholesterol transfer activity of SCARB1 allows E2 exposure and binding of E2 to SCARB1 and the tetraspanin CD81. E1/E2 heterodimer binding on CD81 activates the epithelial growth factor receptor (EGFR) signaling pathway. Diffusion of the complex E1-E2-EGFR-SCARB1-CD81 to the cell lateral membrane allows further interaction with Claudin 1 (CLDN1) and occludin (OCLN) to finally trigger HCV entry. Functionally, forms a heterodimer with envelope glycoprotein E1, which mediates virus attachment to the host cell, virion internalization through clathrin-dependent endocytosis and fusion with host membrane. Fusion with the host cell is most likely mediated by both E1 and E2, through conformational rearrangements of the heterodimer required for fusion rather than a classical class II fusion mechanism. The interaction between envelope glycoprotein E2 and host apolipoprotein E/APOE allows the proper assembly, maturation and infectivity of the viral particles. This interaction is probably promoted via the up-regulation of cellular autophagy by the virus. E1/E2 heterodimer binds host apolipoproteins such as APOB and APOE thereby forming a lipo-viro-particle (LVP). APOE associated to the LVP allows the initial virus attachment to cell surface receptors such as the heparan sulfate proteoglycans (HSPGs), syndecan-1 (SDC1), syndecan-1 (SDC2), the low-density lipoprotein receptor (LDLR) and scavenger receptor class B type I (SCARB1). The cholesterol transfer activity of SCARB1 allows E2 exposure and binding of E2 to SCARB1 and the tetraspanin CD81. E1/E2 heterodimer binding on CD81 activates the epithelial growth factor receptor (EGFR) signaling pathway. Diffusion of the complex E1-E2-EGFR-SCARB1-CD81 to the cell lateral membrane allows further interaction with Claudin 1 (CLDN1) and occludin (OCLN) to finally trigger HCV entry. Inhibits host EIF2AK2/PKR activation, preventing the establishment of an antiviral state. Viral ligand for CD209/DC-SIGN and CLEC4M/DC-SIGNR, which are respectively found on dendritic cells (DCs), and on liver sinusoidal endothelial cells and macrophage-like cells of lymph node sinuses. These interactions allow the capture of circulating HCV particles by these cells and subsequent facilitated transmission to permissive cells such as hepatocytes and lymphocyte subpopulations. The polypeptide is Genome polyprotein (Homo sapiens (Human)).